A 441-amino-acid polypeptide reads, in one-letter code: 4-hydroxybenzoate polyprenyltransferase, mitochondrial (441 aa).

A mitochondrion-targeting transit peptide spans 1–95 (MLRKLTSNSS…TLGELVLRDY (95 aa)). A run of 8 helical transmembrane segments spans residues 129 to 149 (IGSW…APAG), 154 to 174 (LWTL…GCTI), 204 to 224 (AWFF…ELNW), 225 to 245 (YSIV…LMKR), 246 to 266 (ITHW…LLGW), 271 to 291 (GSVM…WTIV), 322 to 342 (LWLS…GMVC), and 378 to 398 (FISN…GTLY). The tract at residues 405–441 (AGKSSTTSSSSTSSSSSPSSGLLLAATNHHQPARQAS) is disordered. Residues 408–424 (SSTTSSSSTSSSSSPSS) show a composition bias toward low complexity. Over residues 432-441 (NHHQPARQAS) the composition is skewed to polar residues.

It belongs to the UbiA prenyltransferase family. It depends on Mg(2+) as a cofactor.

It localises to the mitochondrion inner membrane. It carries out the reaction an all-trans-polyprenyl diphosphate + 4-hydroxybenzoate = a 4-hydroxy-3-(all-trans-polyprenyl)benzoate + diphosphate. It participates in cofactor biosynthesis; ubiquinone biosynthesis. In terms of biological role, catalyzes the prenylation of para-hydroxybenzoate (PHB) with an all-trans polyprenyl group. Mediates the second step in the final reaction sequence of coenzyme Q (CoQ) biosynthesis, which is the condensation of the polyisoprenoid side chain with PHB, generating the first membrane-bound Q intermediate. This is 4-hydroxybenzoate polyprenyltransferase, mitochondrial from Aedes aegypti (Yellowfever mosquito).